Reading from the N-terminus, the 412-residue chain is Exodeoxyribonuclease 7 large subunit (412 aa).

Belongs to the XseA family. In terms of assembly, heterooligomer composed of large and small subunits.

The protein localises to the cytoplasm. The catalysed reaction is Exonucleolytic cleavage in either 5'- to 3'- or 3'- to 5'-direction to yield nucleoside 5'-phosphates.. Functionally, bidirectionally degrades single-stranded DNA into large acid-insoluble oligonucleotides, which are then degraded further into small acid-soluble oligonucleotides. This is Exodeoxyribonuclease 7 large subunit from Nostoc sp. (strain PCC 7120 / SAG 25.82 / UTEX 2576).